The following is a 116-amino-acid chain: Nucleoid-associated protein P9301_00191 (116 aa).

This sequence belongs to the YbaB/EbfC family. As to quaternary structure, homodimer.

It is found in the cytoplasm. The protein localises to the nucleoid. In terms of biological role, binds to DNA and alters its conformation. May be involved in regulation of gene expression, nucleoid organization and DNA protection. The protein is Nucleoid-associated protein P9301_00191 of Prochlorococcus marinus (strain MIT 9301).